A 415-amino-acid chain; its full sequence is Gamma-glutamyl phosphate reductase (415 aa).

Belongs to the gamma-glutamyl phosphate reductase family.

It is found in the cytoplasm. The catalysed reaction is L-glutamate 5-semialdehyde + phosphate + NADP(+) = L-glutamyl 5-phosphate + NADPH + H(+). Its pathway is amino-acid biosynthesis; L-proline biosynthesis; L-glutamate 5-semialdehyde from L-glutamate: step 2/2. Functionally, catalyzes the NADPH-dependent reduction of L-glutamate 5-phosphate into L-glutamate 5-semialdehyde and phosphate. The product spontaneously undergoes cyclization to form 1-pyrroline-5-carboxylate. The protein is Gamma-glutamyl phosphate reductase of Bacillus subtilis (strain 168).